Here is a 456-residue protein sequence, read N- to C-terminus: UPF0496 protein 4 (456 aa).

The chain crosses the membrane as a helical span at residues 195–217 (VLMRALYGIESVTVFVCSIFVAV). Positions 368-390 (QDSNVKQANGSSDESALVVPERT) are disordered. Residues 371-381 (NVKQANGSSDE) show a composition bias toward polar residues.

Belongs to the ROH1 family.

It localises to the membrane. This is UPF0496 protein 4 from Oryza sativa subsp. japonica (Rice).